A 451-amino-acid chain; its full sequence is Inositol-pentakisphosphate 2-kinase (451 aa).

N-acetylmethionine is present on Met-1. ATP-binding positions include 19-22 and Arg-40; that span reads GGAN. Substrate contacts are provided by Arg-45 and Arg-130. ATP-binding positions include 147 to 149 and 166 to 168; these read NDH and EIK. An EXKPK motif motif is present at residues 166–170; it reads EIKPK. Lys-170, Lys-200, and Asn-238 together coordinate substrate. Arg-241 serves as a coordination point for ATP. Zn(2+)-binding residues include His-320, Cys-330, Cys-333, and His-346. Asp-368 contributes to the substrate binding site. Asp-407 lines the ATP pocket. Positions 411, 415, and 419 each coordinate substrate.

Belongs to the IPK1 type 2 family. It depends on Zn(2+) as a cofactor. In terms of tissue distribution, strongly expressed in leaves and cauline leaves. Weakly expressed in siliques and flowers. In flower, it is expressed in the major organs of developing flower buds. Strongly expressed in sepals, petals, in the male and female organs of immature and mature flower buds. Strongly expressed in the gynoecium and carpels which are fused to form the gynoecium. Also expressed in the transmitting tissue and ovules.

It catalyses the reaction 1D-myo-inositol 1,3,4,5,6-pentakisphosphate + ATP = 1D-myo-inositol hexakisphosphate + ADP + H(+). Its function is as follows. Phosphorylates Ins(1,3,4,5,6)P5 at position 2 to form Ins(1,2,3,4,5,6)P6 (InsP6 or phytate). Phytate is a regulator of intracellular signaling, a highly abundant animal antinutrient, and a phosphate store in plant seeds. Also phosphorylates Ins(1,3,4,6)P4 and Ins(1,4,5,6)P4 to produce Ins(1,2,3,4,6)P5 and Ins(1,2,4,5,6)P5. The polypeptide is Inositol-pentakisphosphate 2-kinase (IPK1) (Arabidopsis thaliana (Mouse-ear cress)).